The primary structure comprises 508 residues: Probable glycine dehydrogenase (decarboxylating) subunit 2 (508 aa).

Residue Lys277 is modified to N6-(pyridoxal phosphate)lysine.

The protein belongs to the GcvP family. C-terminal subunit subfamily. As to quaternary structure, the glycine cleavage system is composed of four proteins: P, T, L and H. In this organism, the P 'protein' is a heterodimer of two subunits. It depends on pyridoxal 5'-phosphate as a cofactor.

The enzyme catalyses N(6)-[(R)-lipoyl]-L-lysyl-[glycine-cleavage complex H protein] + glycine + H(+) = N(6)-[(R)-S(8)-aminomethyldihydrolipoyl]-L-lysyl-[glycine-cleavage complex H protein] + CO2. Its function is as follows. The glycine cleavage system catalyzes the degradation of glycine. The P protein binds the alpha-amino group of glycine through its pyridoxal phosphate cofactor; CO(2) is released and the remaining methylamine moiety is then transferred to the lipoamide cofactor of the H protein. The polypeptide is Probable glycine dehydrogenase (decarboxylating) subunit 2 (Saccharolobus solfataricus (strain ATCC 35092 / DSM 1617 / JCM 11322 / P2) (Sulfolobus solfataricus)).